Reading from the N-terminus, the 329-residue chain is Peroxidase 18 (329 aa).

An N-terminal signal peptide occupies residues 1–29 (MALQFFSCKPKYTFLSSLLLLLLLSSSVA). 4 disulfide bridges follow: Cys40/Cys116, Cys73/Cys78, Cys122/Cys325, and Cys201/Cys235. His71 (proton acceptor) is an active-site residue. Residues Asp72, Val75, Gly77, Asp79, and Ser81 each coordinate Ca(2+). Asn87 carries N-linked (GlcNAc...) asparagine glycosylation. Ile164 is a substrate binding site. Position 194 (His194) interacts with heme b. Thr195 provides a ligand contact to Ca(2+). The Ca(2+) site is built by Asp249, Thr252, and Asp257.

This sequence belongs to the peroxidase family. Classical plant (class III) peroxidase subfamily. Requires heme b as cofactor. The cofactor is Ca(2+).

It localises to the secreted. It carries out the reaction 2 a phenolic donor + H2O2 = 2 a phenolic radical donor + 2 H2O. Functionally, removal of H(2)O(2), oxidation of toxic reductants, biosynthesis and degradation of lignin, suberization, auxin catabolism, response to environmental stresses such as wounding, pathogen attack and oxidative stress. These functions might be dependent on each isozyme/isoform in each plant tissue. The chain is Peroxidase 18 (PER18) from Arabidopsis thaliana (Mouse-ear cress).